Reading from the N-terminus, the 1098-residue chain is Protein translocase subunit SecA (1098 aa).

ATP-binding positions include glutamine 176, 194–198 (GEGKT), and aspartate 696. The tract at residues 1024 to 1098 (EPEQVREAAP…KYKNCHGQNA (75 aa)) is disordered. Composition is skewed to basic and acidic residues over residues 1041–1051 (QYREEKQDLSD) and 1058–1077 (AEHDTREVKREPVRAEKTVG). Zn(2+) contacts are provided by cysteine 1082, cysteine 1084, cysteine 1093, and histidine 1094.

This sequence belongs to the SecA family. Monomer and homodimer. Part of the essential Sec protein translocation apparatus which comprises SecA, SecYEG and auxiliary proteins SecDF. Other proteins may also be involved. Requires Zn(2+) as cofactor.

The protein localises to the cell inner membrane. It is found in the cytoplasm. It catalyses the reaction ATP + H2O + cellular proteinSide 1 = ADP + phosphate + cellular proteinSide 2.. Its function is as follows. Part of the Sec protein translocase complex. Interacts with the SecYEG preprotein conducting channel. Has a central role in coupling the hydrolysis of ATP to the transfer of proteins into and across the cell membrane, serving as an ATP-driven molecular motor driving the stepwise translocation of polypeptide chains across the membrane. The chain is Protein translocase subunit SecA from Phocaeicola vulgatus (strain ATCC 8482 / DSM 1447 / JCM 5826 / CCUG 4940 / NBRC 14291 / NCTC 11154) (Bacteroides vulgatus).